The chain runs to 779 residues: MSKEQSCVLKAWEVTVRKTQQAKKRANSIFGTVSVAPQTDDDATTTTEENDDETSTNRSSIGELYHAERILPNGDYYTGQWYDSFPHGHGKYLWTDGCMYIGDWYNGKTMGRGKFGWPSGATYEGEFKSGYMDGVGLYTGPSGDTYKGQWVMNLKHGHGIKRFANGDVYDGEWRRGLQEAQGKYQWRDGSYYMGEWKNATICGKGTFIWTDGNRYDGFWDDGFPRGNGTFKWADGSFYVGHWSNDPEEMNGTYYPSGDDGSPEWDPKDVFTNLSEYKICSGERVPVLPSQKKLSVWNSSKRVEKPRRMSVDGRVSVGVDRAFEKMNMWGTESGEGAADIDSTTRRDLDAEMMRLEAEGFIQSLRPSPAPMRLPRAGRKQGETISKGHRNYELMLNLQLGIRHAVGKQAPVVSLDLKHSAFDPKEKVWTRFPPEGTKYTPPHQSSEFKWKDYCPLVFRSLRKLFKVDPADYMLSICGNDALRELSSPGKSGSFFYLTNDDRYMIKTMKKSETKVLLRMLAAYYNHVRAFENTLVIRFYGLHCVKLTGPIQKKVRFVIMGNLFCSEYSIHRRFDLKGSSLGRTTDKPESEINSNTILKDLDLNFIFRLQKAWYQEFIRQVDKDCEFLEQERIMDYSLLVGIHFREASVAGELIPSGARTPIGEFEDESAPRLSRADVDQLLSDPTRWASIRLGGNMPARAERTMRRSDCEFQLVGEPTGEYYEVVMIFGIIDILQDYDISKKLEHAYKSIQYDPTSISAVDPRLYSRRFRDFIFKVFTEDN.

Positions Gln-20–Ile-61 are disordered. Residues Thr-39–Thr-54 are compositionally biased toward acidic residues. MORN repeat units lie at residues Tyr-77–Met-99, Tyr-100–Thr-122, Tyr-123–Thr-145, Tyr-146–Val-168, Tyr-169–Tyr-191, Tyr-192–Arg-214, Tyr-215–Phe-237, and Tyr-238–Asp-259. One can recognise a PIPK domain in the interval Thr-382–Phe-775. Residues Tyr-735–Ser-756 form an activation loop region.

The catalysed reaction is a 1,2-diacyl-sn-glycero-3-phospho-(1D-myo-inositol 4-phosphate) + ATP = a 1,2-diacyl-sn-glycero-3-phospho-(1D-myo-inositol-4,5-bisphosphate) + ADP + H(+). In Arabidopsis thaliana (Mouse-ear cress), this protein is Phosphatidylinositol 4-phosphate 5-kinase 4 (PIP5K4).